The following is a 222-amino-acid chain: Salivary anticoagulant protein P23 (222 aa).

Positions 1–17 (MLTVSLLTLSLAAYASA) are cleaved as a signal peptide. Residues Asn-56, Asn-73, Asn-109, and Asn-114 are each glycosylated (N-linked (GlcNAc...) asparagine).

Salivary gland (at protein level). Adult midgut.

It localises to the secreted. Functionally, inhibits host coagulation by delaying thrombin generation and reducing endogenous thrombin potential (ETP). This is Salivary anticoagulant protein P23 from Ixodes scapularis (Black-legged tick).